Consider the following 422-residue polypeptide: Serine hydroxymethyltransferase (422 aa).

(6S)-5,6,7,8-tetrahydrofolate-binding positions include Leu118 and Gly122 to Leu124. Position 227 is an N6-(pyridoxal phosphate)lysine (Lys227). (6S)-5,6,7,8-tetrahydrofolate is bound by residues Glu243 and Ser351–Phe353.

Belongs to the SHMT family. In terms of assembly, homodimer. The cofactor is pyridoxal 5'-phosphate.

The protein localises to the cytoplasm. It catalyses the reaction (6R)-5,10-methylene-5,6,7,8-tetrahydrofolate + glycine + H2O = (6S)-5,6,7,8-tetrahydrofolate + L-serine. Its pathway is one-carbon metabolism; tetrahydrofolate interconversion. The protein operates within amino-acid biosynthesis; glycine biosynthesis; glycine from L-serine: step 1/1. Its function is as follows. Catalyzes the reversible interconversion of serine and glycine with tetrahydrofolate (THF) serving as the one-carbon carrier. This reaction serves as the major source of one-carbon groups required for the biosynthesis of purines, thymidylate, methionine, and other important biomolecules. Also exhibits THF-independent aldolase activity toward beta-hydroxyamino acids, producing glycine and aldehydes, via a retro-aldol mechanism. This Kosmotoga olearia (strain ATCC BAA-1733 / DSM 21960 / TBF 19.5.1) protein is Serine hydroxymethyltransferase.